A 335-amino-acid polypeptide reads, in one-letter code: Oligopeptide transport ATP-binding protein OppD (335 aa).

The ABC transporter domain occupies 18–267; sequence LEVNDLRVTF…PVHPYSIGLL (250 aa). 54 to 61 contributes to the ATP binding site; it reads GESGSGKS.

This sequence belongs to the ABC transporter superfamily. In terms of assembly, the complex is composed of two ATP-binding proteins (OppD and OppF), two transmembrane proteins (OppB and OppC) and a solute-binding protein (OppA).

The protein resides in the cell inner membrane. It catalyses the reaction a [peptide](out) + ATP + H2O = a [peptide](in) + ADP + phosphate + H(+). The enzyme catalyses L-alanyl-gamma-D-glutamyl-meso-2,6-diaminopimelate(out) + ATP + H2O = L-alanyl-gamma-D-glutamyl-meso-2,6-diaminopimelate(in) + ADP + phosphate + H(+). Part of the ABC transporter complex OppABCDF involved in the uptake of oligopeptides, including the cell wall murein tripeptide L-alanyl-gamma-D-glutamyl-meso-diaminopimelate. Responsible for energy coupling to the transport system. Plays an important nutritional role and is involved in the recycling of cell wall peptides. Binds ATP. The chain is Oligopeptide transport ATP-binding protein OppD from Salmonella typhimurium (strain LT2 / SGSC1412 / ATCC 700720).